A 94-amino-acid chain; its full sequence is Large ribosomal subunit protein bL27 (94 aa).

The propeptide occupies 1–9; the sequence is MLKLNLQFF.

Belongs to the bacterial ribosomal protein bL27 family. The N-terminus is cleaved by ribosomal processing cysteine protease Prp.

The polypeptide is Large ribosomal subunit protein bL27 (Staphylococcus aureus (strain Mu3 / ATCC 700698)).